The following is a 253-amino-acid chain: 5-oxoprolinase subunit A (253 aa).

This sequence belongs to the LamB/PxpA family. As to quaternary structure, forms a complex composed of PxpA, PxpB and PxpC.

It catalyses the reaction 5-oxo-L-proline + ATP + 2 H2O = L-glutamate + ADP + phosphate + H(+). Its function is as follows. Catalyzes the cleavage of 5-oxoproline to form L-glutamate coupled to the hydrolysis of ATP to ADP and inorganic phosphate. This Ruegeria pomeroyi (strain ATCC 700808 / DSM 15171 / DSS-3) (Silicibacter pomeroyi) protein is 5-oxoprolinase subunit A.